A 24-amino-acid chain; its full sequence is Brevinin-1Pc (24 aa).

Cys-18 and Cys-24 form a disulfide bridge.

In terms of tissue distribution, expressed by the skin glands.

It localises to the secreted. In terms of biological role, antibacterial activity against Gram-positive bacterium S.aureus and Gram-negative bacterium E.coli. Has activity against C.albicans. In Lithobates pipiens (Northern leopard frog), this protein is Brevinin-1Pc.